The chain runs to 464 residues: MDLPDESQWDETTCGFAVCQHPQCWATVRRIERGRPRILGSTCKTPLDAEDKLPVLTVVNISDSCFAPRHLPECTVTKARSLLSRSSKFYSKFHGRPPKGLPDKSLINCTNRLPKLPVLNLNETQLPCPEDVRNMVVLWIPEETEIHGRQHGKKKRKNLTVKSKSFLGLSGNQSAVTRVETPGMTVPPPTPVQLSKQFSSDFLPLWAQSEALPQDLLKELLPDRKQTMPCLEMKIKLAMMKKNLPLERNRPDSAISSKMFLSIHRLTLERPALRYPERLKKLHNLKTEGYRKQQQWQQQQQQRKVKTPIKKQEAKKKAKSDPGSQSTSHKHPVTTVHDPLYGYRTLPGQNGDMKQQQQMEKGTTSKQDSTERPKMDYCDHVDFHHNVKGPELYETEPTNKDISAPVEAVLKAQAARQKKISFNFSEIMVRTGWNSELKLLRILQETDDEDEENQYSEAEKPLEE.

Disordered stretches follow at residues 290–374 (YRKQ…ERPK) and 445–464 (ETDD…PLEE). The segment covering 293–302 (QQQWQQQQQQ) has biased composition (low complexity). Residues 303-318 (RKVKTPIKKQEAKKKA) show a composition bias toward basic residues. Residues 352–367 (DMKQQQQMEKGTTSKQ) show a composition bias toward polar residues. Positions 445–454 (ETDDEDEENQ) are enriched in acidic residues.

This is an uncharacterized protein from Macaca fascicularis (Crab-eating macaque).